The chain runs to 272 residues: Shikimate dehydrogenase (NADP(+)) (272 aa).

Shikimate-binding positions include 14–16 and T61; that span reads SKS. Catalysis depends on K65, which acts as the Proton acceptor. Residue E77 participates in NADP(+) binding. 2 residues coordinate shikimate: N86 and D102. Residues 126–130, 149–154, and M213 each bind NADP(+); these read GAGGA and NRTVSR. A shikimate-binding site is contributed by Y215. An NADP(+)-binding site is contributed by G237.

It belongs to the shikimate dehydrogenase family. As to quaternary structure, homodimer.

It carries out the reaction shikimate + NADP(+) = 3-dehydroshikimate + NADPH + H(+). It participates in metabolic intermediate biosynthesis; chorismate biosynthesis; chorismate from D-erythrose 4-phosphate and phosphoenolpyruvate: step 4/7. Involved in the biosynthesis of the chorismate, which leads to the biosynthesis of aromatic amino acids. Catalyzes the reversible NADPH linked reduction of 3-dehydroshikimate (DHSA) to yield shikimate (SA). This is Shikimate dehydrogenase (NADP(+)) from Shigella dysenteriae serotype 1 (strain Sd197).